The chain runs to 297 residues: Acetaldehyde dehydrogenase (297 aa).

Residue 15–18 (SGSI) coordinates NAD(+). C130 acts as the Acyl-thioester intermediate in catalysis. Residues 162-170 (SAGIATREN) and N272 contribute to the NAD(+) site.

The protein belongs to the acetaldehyde dehydrogenase family.

It catalyses the reaction acetaldehyde + NAD(+) + CoA = acetyl-CoA + NADH + H(+). This Burkholderia pseudomallei (strain 1106a) protein is Acetaldehyde dehydrogenase.